The chain runs to 182 residues: Glutathione-regulated potassium-efflux system ancillary protein KefG (182 aa).

The protein belongs to the NAD(P)H dehydrogenase (quinone) family. KefG subfamily. In terms of assembly, interacts with KefB.

The protein localises to the cell inner membrane. The catalysed reaction is a quinone + NADH + H(+) = a quinol + NAD(+). It carries out the reaction a quinone + NADPH + H(+) = a quinol + NADP(+). Its function is as follows. Regulatory subunit of a potassium efflux system that confers protection against electrophiles. Required for full activity of KefB. This chain is Glutathione-regulated potassium-efflux system ancillary protein KefG, found in Yersinia pseudotuberculosis serotype O:1b (strain IP 31758).